The primary structure comprises 199 residues: Protein p2 (199 aa).

The protein resides in the host cytoplasm. The polypeptide is Protein p2 (Avena sativa (Oat)).